The following is a 138-amino-acid chain: Class I hydrophobin 1 (138 aa).

A signal peptide spans 1–19 (MRFSAATVSALAMALTVAA). Intrachain disulfides connect C45-C113, C53-C107, C54-C91, and C114-C131.

This sequence belongs to the fungal hydrophobin family. In terms of assembly, interacts with the lipid droplet coating protein Cap20.

The protein resides in the secreted. The protein localises to the lipid droplet. In terms of biological role, aerial growth, conidiation, and dispersal of filamentous fungi in the environment rely upon a capability of their secreting small amphipathic proteins called hydrophobins (HPBs) with low sequence identity. Class I can self-assemble into an outermost layer of rodlet bundles on aerial cell surfaces, conferring cellular hydrophobicity that supports fungal growth, development and dispersal; whereas Class II form highly ordered films at water-air interfaces through intermolecular interactions but contribute nothing to the rodlet structure. Hydr1 is a class I hydrophobin involved in spore germination, appressorium formation, but not in the formation of the rodlet layer of conidia. Responsible for the full virulence on rubber tree leaves. This Colletotrichum siamense (Anthracnose fungus) protein is Class I hydrophobin 1.